Reading from the N-terminus, the 330-residue chain is MKVLYDDDVNTNVLENKTIAVIGYGSQGRGQSLNMHDSGLNVIVGLREGGKSWKKAQEDGLTVKTIEDASKEADIIHILIPDEIQKTVYENQIQQYVEPGNTISFSHGYNIHFNRIRVPEDVNVTMIAPKAPGSKVRQTYQEGFGTPGLIAIEQDATGDAYDIAIEMAKAVGLTRAGVIETTYREETETDLFGEQAVLCGGLTGLIQAGFETLVEAGYKPEMAYFETCHEMKLIVDLIYEKGFGNMWHDVSNTAEFGGLTRRDRVITEESKENMKKILREIQDGTFATEFAVDADTSYPKLLTQRRLEGEKQIEKVGKNLRIACGLQKEE.

One can recognise a KARI N-terminal Rossmann domain in the interval 1–181; sequence MKVLYDDDVN…GLTRAGVIET (181 aa). Residues 24–27, Arg47, Ser52, and 82–85 each bind NADP(+); these read YGSQ and DEIQ. The active site involves His107. Residue Gly133 participates in NADP(+) binding. One can recognise a KARI C-terminal knotted domain in the interval 182–327; the sequence is TYREETETDL…KNLRIACGLQ (146 aa). Residues Asp190, Glu194, Glu226, and Glu230 each contribute to the Mg(2+) site. Ser251 is a substrate binding site.

The protein belongs to the ketol-acid reductoisomerase family. The cofactor is Mg(2+).

It carries out the reaction (2R)-2,3-dihydroxy-3-methylbutanoate + NADP(+) = (2S)-2-acetolactate + NADPH + H(+). The enzyme catalyses (2R,3R)-2,3-dihydroxy-3-methylpentanoate + NADP(+) = (S)-2-ethyl-2-hydroxy-3-oxobutanoate + NADPH + H(+). Its pathway is amino-acid biosynthesis; L-isoleucine biosynthesis; L-isoleucine from 2-oxobutanoate: step 2/4. It functions in the pathway amino-acid biosynthesis; L-valine biosynthesis; L-valine from pyruvate: step 2/4. Functionally, involved in the biosynthesis of branched-chain amino acids (BCAA). Catalyzes an alkyl-migration followed by a ketol-acid reduction of (S)-2-acetolactate (S2AL) to yield (R)-2,3-dihydroxy-isovalerate. In the isomerase reaction, S2AL is rearranged via a Mg-dependent methyl migration to produce 3-hydroxy-3-methyl-2-ketobutyrate (HMKB). In the reductase reaction, this 2-ketoacid undergoes a metal-dependent reduction by NADPH to yield (R)-2,3-dihydroxy-isovalerate. In Methanosphaera stadtmanae (strain ATCC 43021 / DSM 3091 / JCM 11832 / MCB-3), this protein is Ketol-acid reductoisomerase (NADP(+)).